Here is a 741-residue protein sequence, read N- to C-terminus: MYPVNLKLSIKFLFYFFLYFLLIIIIYGVYLYFKINQVIHGKIWKFPISIYSRIVTLEPGNNYSKKDIIAILKSNRYKQVNFLTMPGEFLVKRNSLILIRRSFNFPEGFEDKISIKLLFDKNKLVRIVHLSNNRNFSILRLDPQLIAMIYSPKGEKRLFVSQKNYPKALIQTLLTIEDKCFYNHYGINFYSMFRAFFVNLISGHSIQGGSTLTQQLVKNLFLTNIRSLWRKINEIYMALILDFQYSKEKILELYLNEVYLGQDKNEQIRGFALASLYYFGRPINELRLDECALLVGMVKGASLYNPWNNPVLTLNRRNLVLYVLFKHKVINRTLYEKLKSKPLNIQSRGNIIWFRSAFVQIVEKEFQKKVGYYFQNFSGIKIFTTLDLISQIAAENAIRHGIQQLKKKYKLQDLEASMVIIDRFSGEIRGVLGSSNPNLLGYNRAIQAKRSIGSLSKPITYLAALSQPEYFRLNTWIPDTPIKIKMQNGKLWKPQNNNFEFVGKVMLIDALKNSMNVPIVHLSMKLGLKKIVQTWIQLGLSSNHIFKYPSIALGSINLTSMEVAKIFQVISSGGNKANIISIRSVLSENNKLIYHSFPQSKQVISAQASYLTLYAMQSVVSSGTAKHLGKFFKNMHLAGKTGTTNNLVDSWFVGIDGRQVVIVWIGRDNNKTTKCYGSTGAMKIYHNYLKLNNPKPLLLIPPRDVYFLNINKSGDFMCFRSYSKYFRAIPVWIRNHNIFCT.

Over 1–12 (MYPVNLKLSIKF) the chain is Cytoplasmic. A helical; Signal-anchor for type II membrane protein transmembrane segment spans residues 13-33 (LFYFFLYFLLIIIIYGVYLYF). Residues 34–741 (KINQVIHGKI…WIRNHNIFCT (708 aa)) are Extracellular-facing. The interval 139 to 311 (LRLDPQLIAM…SLYNPWNNPV (173 aa)) is transglycosylase. Residue glutamate 177 is the Proton donor; for transglycosylase activity of the active site. The segment at 395-687 (ENAIRHGIQQ…STGAMKIYHN (293 aa)) is transpeptidase. The active-site Acyl-ester intermediate; for transpeptidase activity is serine 454.

The protein in the N-terminal section; belongs to the glycosyltransferase 51 family. It in the C-terminal section; belongs to the transpeptidase family.

It localises to the cell membrane. The catalysed reaction is [GlcNAc-(1-&gt;4)-Mur2Ac(oyl-L-Ala-gamma-D-Glu-L-Lys-D-Ala-D-Ala)](n)-di-trans,octa-cis-undecaprenyl diphosphate + beta-D-GlcNAc-(1-&gt;4)-Mur2Ac(oyl-L-Ala-gamma-D-Glu-L-Lys-D-Ala-D-Ala)-di-trans,octa-cis-undecaprenyl diphosphate = [GlcNAc-(1-&gt;4)-Mur2Ac(oyl-L-Ala-gamma-D-Glu-L-Lys-D-Ala-D-Ala)](n+1)-di-trans,octa-cis-undecaprenyl diphosphate + di-trans,octa-cis-undecaprenyl diphosphate + H(+). It catalyses the reaction Preferential cleavage: (Ac)2-L-Lys-D-Ala-|-D-Ala. Also transpeptidation of peptidyl-alanyl moieties that are N-acyl substituents of D-alanine.. It functions in the pathway cell wall biogenesis; peptidoglycan biosynthesis. Its function is as follows. Cell wall formation. Synthesis of cross-linked peptidoglycan from the lipid intermediates. The enzyme has a penicillin-insensitive transglycosylase N-terminal domain (formation of linear glycan strands) and a penicillin-sensitive transpeptidase C-terminal domain (cross-linking of the peptide subunits). The protein is Penicillin-binding protein 1B (mrcB) of Buchnera aphidicola subsp. Baizongia pistaciae (strain Bp).